We begin with the raw amino-acid sequence, 322 residues long: tRNA uridine(34) hydroxylase (322 aa).

Residues 125 to 219 form the Rhodanese domain; that stretch reads QSPDTVVIDA…YGKDPEVQGK (95 aa). The Cysteine persulfide intermediate role is filled by Cys179.

It belongs to the TrhO family.

The catalysed reaction is uridine(34) in tRNA + AH2 + O2 = 5-hydroxyuridine(34) in tRNA + A + H2O. Catalyzes oxygen-dependent 5-hydroxyuridine (ho5U) modification at position 34 in tRNAs. In Bacillus pumilus (strain SAFR-032), this protein is tRNA uridine(34) hydroxylase.